Here is a 75-residue protein sequence, read N- to C-terminus: Conotoxin Im23.5 (75 aa).

The N-terminal stretch at 1–23 (MKFFTCLLLLLVVLTVVFDNVDA) is a signal peptide. 3 disulfides stabilise this stretch: C24/C28, C37/C40, and C41/C43. A propeptide spanning residues 24-50 (CDRSCTGVMGHPSCATCCACFTSAGKR) is cleaved from the precursor.

Expressed by the venom duct.

It is found in the secreted. Probable neurotoxin. The protein is Conotoxin Im23.5 of Conus imperialis (Imperial cone).